We begin with the raw amino-acid sequence, 983 residues long: UPF0182 protein CMM_1204 (983 aa).

Transmembrane regions (helical) follow at residues 16–36 (LAIT…FAGF), 56–76 (WGAG…PVFV), 108–128 (LAMF…ASSG), 161–181 (FYHA…LGVL), 205–225 (IQIA…IWLD), 255–275 (AILA…AVIG), and 281–301 (IIGT…YPAI). The segment covering 699–714 (QDLWTTPNDPTATTEA) has biased composition (polar residues). 2 disordered regions span residues 699–718 (QDLW…GTPA) and 884–936 (DSGA…AQDV). Gly residues predominate over residues 902 to 918 (GGTGDGATDGATDGGTG). Low complexity predominate over residues 919-933 (STPTPAPTTSPSAPA).

This sequence belongs to the UPF0182 family.

The protein localises to the cell membrane. The protein is UPF0182 protein CMM_1204 of Clavibacter michiganensis subsp. michiganensis (strain NCPPB 382).